A 393-amino-acid polypeptide reads, in one-letter code: Protein TsgA (393 aa).

The next 12 membrane-spanning stretches (helical) occupy residues 11 to 31, 51 to 71, 78 to 98, 101 to 121, 134 to 154, 162 to 182, 206 to 226, 245 to 265, 273 to 293, 297 to 317, 332 to 352, and 361 to 381; these read WISF…GMVM, FLNA…EIVP, FGFL…SLAL, AAMF…TFLV, LLFT…IAAF, WYWV…LTFG, IGVL…LGFI, TLVS…SFIL, ILTV…TGTP, AWSI…IITL, FVLT…GPIV, and LLTA…LGFV.

The protein belongs to the major facilitator superfamily. TsgA family.

It localises to the cell inner membrane. This Escherichia coli O139:H28 (strain E24377A / ETEC) protein is Protein TsgA.